The sequence spans 571 residues: Proline--tRNA ligase (571 aa).

The protein belongs to the class-II aminoacyl-tRNA synthetase family. ProS type 1 subfamily. As to quaternary structure, homodimer.

Its subcellular location is the cytoplasm. The catalysed reaction is tRNA(Pro) + L-proline + ATP = L-prolyl-tRNA(Pro) + AMP + diphosphate. In terms of biological role, catalyzes the attachment of proline to tRNA(Pro) in a two-step reaction: proline is first activated by ATP to form Pro-AMP and then transferred to the acceptor end of tRNA(Pro). As ProRS can inadvertently accommodate and process non-cognate amino acids such as alanine and cysteine, to avoid such errors it has two additional distinct editing activities against alanine. One activity is designated as 'pretransfer' editing and involves the tRNA(Pro)-independent hydrolysis of activated Ala-AMP. The other activity is designated 'posttransfer' editing and involves deacylation of mischarged Ala-tRNA(Pro). The misacylated Cys-tRNA(Pro) is not edited by ProRS. This is Proline--tRNA ligase from Shewanella baltica (strain OS195).